We begin with the raw amino-acid sequence, 273 residues long: HTH-type transcriptional regulator NimR (273 aa).

In terms of domain architecture, HTH araC/xylS-type spans 158–258; that stretch reads PKIRTMVEMM…GQTPGRYIAR (101 aa). 2 consecutive DNA-binding regions (H-T-H motif) follow at residues 178 to 199 and 225 to 248; these read GQWAGFFAMSERNLARLIVKET and VQKVAHTLGYDSTTAFITMFKKGL.

In terms of biological role, negatively regulates expression of the nimT operon and its own expression. Acts by binding to the nimR-nimT intergenic region. The protein is HTH-type transcriptional regulator NimR of Escherichia coli (strain K12).